The primary structure comprises 221 residues: Deoxyribose-phosphate aldolase (221 aa).

Aspartate 89 (proton donor/acceptor) is an active-site residue. The Schiff-base intermediate with acetaldehyde role is filled by lysine 151. Lysine 180 serves as the catalytic Proton donor/acceptor.

It belongs to the DeoC/FbaB aldolase family. DeoC type 1 subfamily.

The protein localises to the cytoplasm. The enzyme catalyses 2-deoxy-D-ribose 5-phosphate = D-glyceraldehyde 3-phosphate + acetaldehyde. The protein operates within carbohydrate degradation; 2-deoxy-D-ribose 1-phosphate degradation; D-glyceraldehyde 3-phosphate and acetaldehyde from 2-deoxy-alpha-D-ribose 1-phosphate: step 2/2. In terms of biological role, catalyzes a reversible aldol reaction between acetaldehyde and D-glyceraldehyde 3-phosphate to generate 2-deoxy-D-ribose 5-phosphate. The polypeptide is Deoxyribose-phosphate aldolase (Brevibacillus brevis (strain 47 / JCM 6285 / NBRC 100599)).